Consider the following 975-residue polypeptide: Probable dipeptidyl-aminopeptidase B (975 aa).

The segment covering 1–20 has biased composition (basic and acidic residues); it reads MAEHGHNMWEEEPSKGRDSL. Residues 1 to 111 are disordered; that stretch reads MAEHGHNMWE…LSAASGSAGK (111 aa). The Cytoplasmic portion of the chain corresponds to 1–125; the sequence is MAEHGHNMWE…YRMMDRGLRR (125 aa). Over residues 22-31 the composition is skewed to low complexity; that stretch reads SDSSASTTSL. Over residues 68 to 84 the composition is skewed to acidic residues; the sequence is LDDEDPLKDEASGDYDL. Residues 126 to 146 form a helical; Signal-anchor for type II membrane protein membrane-spanning segment; it reads VLIIASLVFVTAWVGGLFIYI. At 147–975 the chain is on the vacuolar side; it reads SHKSYLHGSE…IDNAKPQGKR (829 aa). N-linked (GlcNAc...) asparagine glycosylation is found at Asn-207, Asn-397, and Asn-622. Ser-826 (charge relay system) is an active-site residue. Asn-885 carries an N-linked (GlcNAc...) asparagine glycan. Active-site charge relay system residues include Asp-903 and His-936.

This sequence belongs to the peptidase S9B family.

It is found in the vacuole membrane. It catalyses the reaction Release of an N-terminal dipeptide, Xaa-Yaa-|-Zaa-, from a polypeptide, preferentially when Yaa is Pro, provided Zaa is neither Pro nor hydroxyproline.. Functionally, type IV dipeptidyl-peptidase which removes N-terminal dipeptides sequentially from polypeptides having unsubstituted N-termini provided that the penultimate residue is proline. This is Probable dipeptidyl-aminopeptidase B (DAPB) from Grosmannia clavigera (strain kw1407 / UAMH 11150) (Blue stain fungus).